We begin with the raw amino-acid sequence, 891 residues long: Protein translocase subunit SecA 1 (891 aa).

ATP is bound by residues Gln86, 104-108 (GEGKT), and Asp493. Residues 845 to 873 (KQVAKPIEASHGDGNRKKAPVVKEKEAGR) show a composition bias toward basic and acidic residues. The disordered stretch occupies residues 845–891 (KQVAKPIEASHGDGNRKKAPVVKEKEAGRNDPCPCGSGKKYKKCCGE). Zn(2+)-binding residues include Cys877, Cys879, Cys888, and Cys889.

The protein belongs to the SecA family. As to quaternary structure, monomer and homodimer. Part of the essential Sec protein translocation apparatus which comprises SecA, SecYEG and auxiliary proteins SecDF. Other proteins may also be involved. Zn(2+) serves as cofactor.

It localises to the cell membrane. Its subcellular location is the cytoplasm. It carries out the reaction ATP + H2O + cellular proteinSide 1 = ADP + phosphate + cellular proteinSide 2.. Part of the Sec protein translocase complex. Interacts with the SecYEG preprotein conducting channel. Has a central role in coupling the hydrolysis of ATP to the transfer of proteins into and across the cell membrane, serving as an ATP-driven molecular motor driving the stepwise translocation of polypeptide chains across the membrane. This chain is Protein translocase subunit SecA 1, found in Alkaliphilus metalliredigens (strain QYMF).